A 488-amino-acid polypeptide reads, in one-letter code: Rhamnulokinase (488 aa).

An ATP-binding site is contributed by 13–17 (ASSGR). Cysteine 68 and cysteine 222 are joined by a disulfide. Substrate contacts are provided by residues glycine 83 and 236 to 238 (HDT). Aspartate 237 acts as the Proton acceptor in catalysis. Position 259 (threonine 259) interacts with ATP. Asparagine 296 lines the substrate pocket. Glutamine 304 contacts ATP. Cysteine 353 and cysteine 370 are disulfide-bonded. Residue glycine 402 participates in ATP binding. Residues cysteine 413 and cysteine 417 are joined by a disulfide bond.

The protein belongs to the rhamnulokinase family. Requires Mg(2+) as cofactor.

It carries out the reaction L-rhamnulose + ATP = L-rhamnulose 1-phosphate + ADP + H(+). The protein operates within carbohydrate degradation; L-rhamnose degradation; glycerone phosphate from L-rhamnose: step 2/3. Involved in the catabolism of L-rhamnose (6-deoxy-L-mannose). Catalyzes the transfer of the gamma-phosphate group from ATP to the 1-hydroxyl group of L-rhamnulose to yield L-rhamnulose 1-phosphate. The sequence is that of Rhamnulokinase from Klebsiella pneumoniae (strain 342).